Reading from the N-terminus, the 162-residue chain is uncharacterized protein (162 aa).

The region spanning 6-71 is the HTH asnC-type domain; it reads LDDLDRAILK…PIKPRKLALV (66 aa). Residues 25 to 44 constitute a DNA-binding region (H-T-H motif); the sequence is IAEISNQLKKPESTVHFRIK.

This is an uncharacterized protein from Pyrococcus abyssi (strain GE5 / Orsay).